The sequence spans 342 residues: Isopentenyl-diphosphate delta-isomerase (342 aa).

11–12 (RK) contributes to the substrate binding site. FMN-binding positions include S68, 69–71 (SMT), S99, and N127. Residue 99–101 (SMR) participates in substrate binding. Position 162 (Q162) interacts with substrate. E163 serves as a coordination point for Mg(2+). FMN contacts are provided by residues K194, T224, 274-276 (GFK), and 295-296 (AG).

Belongs to the IPP isomerase type 2 family. Homooctamer. Dimer of tetramers. Requires FMN as cofactor. NADPH serves as cofactor. It depends on Mg(2+) as a cofactor.

The protein resides in the cytoplasm. The enzyme catalyses isopentenyl diphosphate = dimethylallyl diphosphate. Functionally, involved in the biosynthesis of isoprenoids. Catalyzes the 1,3-allylic rearrangement of the homoallylic substrate isopentenyl (IPP) to its allylic isomer, dimethylallyl diphosphate (DMAPP). The chain is Isopentenyl-diphosphate delta-isomerase from Rickettsia conorii (strain ATCC VR-613 / Malish 7).